Reading from the N-terminus, the 374-residue chain is tRNA-specific 2-thiouridylase MnmA (374 aa).

ATP-binding positions include 13 to 20 (GMSGGVDS) and methionine 39. An interaction with target base in tRNA region spans residues 99-101 (NPD). The active-site Nucleophile is cysteine 104. The cysteines at positions 104 and 201 are disulfide-linked. Glycine 128 serves as a coordination point for ATP. Residues 151 to 153 (KDQ) form an interaction with tRNA region. The active-site Cysteine persulfide intermediate is cysteine 201. Residues 313–314 (RY) are interaction with tRNA.

It belongs to the MnmA/TRMU family.

It is found in the cytoplasm. It carries out the reaction S-sulfanyl-L-cysteinyl-[protein] + uridine(34) in tRNA + AH2 + ATP = 2-thiouridine(34) in tRNA + L-cysteinyl-[protein] + A + AMP + diphosphate + H(+). Its function is as follows. Catalyzes the 2-thiolation of uridine at the wobble position (U34) of tRNA, leading to the formation of s(2)U34. This chain is tRNA-specific 2-thiouridylase MnmA, found in Streptococcus equi subsp. zooepidemicus (strain H70).